A 484-amino-acid polypeptide reads, in one-letter code: tRNA sulfurtransferase (484 aa).

In terms of domain architecture, THUMP spans 61–166; the sequence is PHLIELLQCI…DKLLFIQARH (106 aa). Residues 183-184, Lys-265, Gly-287, and Gln-296 contribute to the ATP site; that span reads LI. Cys-344 and Cys-456 are disulfide-bonded. A Rhodanese domain is found at 404-483; sequence LGENDVILDI…FNNVQVFVKA (80 aa). The Cysteine persulfide intermediate role is filled by Cys-456.

It belongs to the ThiI family.

The protein localises to the cytoplasm. The catalysed reaction is [ThiI sulfur-carrier protein]-S-sulfanyl-L-cysteine + a uridine in tRNA + 2 reduced [2Fe-2S]-[ferredoxin] + ATP + H(+) = [ThiI sulfur-carrier protein]-L-cysteine + a 4-thiouridine in tRNA + 2 oxidized [2Fe-2S]-[ferredoxin] + AMP + diphosphate. The enzyme catalyses [ThiS sulfur-carrier protein]-C-terminal Gly-Gly-AMP + S-sulfanyl-L-cysteinyl-[cysteine desulfurase] + AH2 = [ThiS sulfur-carrier protein]-C-terminal-Gly-aminoethanethioate + L-cysteinyl-[cysteine desulfurase] + A + AMP + 2 H(+). It participates in cofactor biosynthesis; thiamine diphosphate biosynthesis. Its function is as follows. Catalyzes the ATP-dependent transfer of a sulfur to tRNA to produce 4-thiouridine in position 8 of tRNAs, which functions as a near-UV photosensor. Also catalyzes the transfer of sulfur to the sulfur carrier protein ThiS, forming ThiS-thiocarboxylate. This is a step in the synthesis of thiazole, in the thiamine biosynthesis pathway. The sulfur is donated as persulfide by IscS. This Actinobacillus succinogenes (strain ATCC 55618 / DSM 22257 / CCUG 43843 / 130Z) protein is tRNA sulfurtransferase.